Consider the following 152-residue polypeptide: Ubiquitin-conjugating enzyme E2 A (152 aa).

Residues 4–150 (PARRRLMRDF…VSAIVEQSWR (147 aa)) enclose the UBC core domain. C88 serves as the catalytic Glycyl thioester intermediate. S120 carries the post-translational modification Phosphoserine; by CDK9.

It belongs to the ubiquitin-conjugating enzyme family. Interacts with RAD18 and WAC. Interacts with RFPL4A and CCNB1. Post-translationally, phosphorylation at Ser-120 by CDK9 increases activity towards histone H2B.

It is found in the late endosome. Its subcellular location is the lysosome. It carries out the reaction S-ubiquitinyl-[E1 ubiquitin-activating enzyme]-L-cysteine + [E2 ubiquitin-conjugating enzyme]-L-cysteine = [E1 ubiquitin-activating enzyme]-L-cysteine + S-ubiquitinyl-[E2 ubiquitin-conjugating enzyme]-L-cysteine.. It functions in the pathway protein modification; protein ubiquitination. Functionally, E2 ubiquitin-conjugating enzyme that accepts ubiquitin from the ubiquitin-activating enzyme E1 and transfers it to a E3 ubiquitin-protein ligase. In vitro catalyzes 'Lys-11', as well as 'Lys-48'-linked polyubiquitination. Together with the E3 enzyme BRE1 (RNF20 and/or RNF40), plays a role in transcription regulation by catalyzing the monoubiquitination of histone H2B at 'Lys-120' to form H2BK120ub1. H2BK120ub1 gives a specific tag for epigenetic transcriptional activation, elongation by RNA polymerase II, telomeric silencing, and is also a prerequisite for H3K4me and H3K79me formation. Involved in mitophagy by acting as a E2 ubiquitin-conjugating enzyme for PRKN. In association with the E3 enzyme UBR4, is involved in N-end rule-dependent protein degradation. In association with the E3 ubiquitin-protein ligase complex SIFI, inhibits the mitochondrial stress response by acting as a E2 ubiquitin-conjugating enzyme for UBR4 and KCMF1. The protein is Ubiquitin-conjugating enzyme E2 A of Homo sapiens (Human).